The primary structure comprises 171 residues: Sec-independent protein translocase protein TatB (171 aa).

The chain crosses the membrane as a helical span at residues 2–22 (FDGIGFMELLLIGVLGLVVLG). The disordered stretch occupies residues 69–171 (SKGLSNLSPE…DTRSNPKANG (103 aa)). A compositionally biased stretch (polar residues) spans 88–97 (QAAQSVNRPY). 2 stretches are compositionally biased toward low complexity: residues 114–130 (HSPV…HTSP) and 138–158 (PTAT…SEPS). The span at 160–171 (GADTRSNPKANG) shows a compositional bias: polar residues.

It belongs to the TatB family. As to quaternary structure, the Tat system comprises two distinct complexes: a TatABC complex, containing multiple copies of TatA, TatB and TatC subunits, and a separate TatA complex, containing only TatA subunits. Substrates initially bind to the TatABC complex, which probably triggers association of the separate TatA complex to form the active translocon.

It localises to the cell inner membrane. Part of the twin-arginine translocation (Tat) system that transports large folded proteins containing a characteristic twin-arginine motif in their signal peptide across membranes. Together with TatC, TatB is part of a receptor directly interacting with Tat signal peptides. TatB may form an oligomeric binding site that transiently accommodates folded Tat precursor proteins before their translocation. This chain is Sec-independent protein translocase protein TatB, found in Shewanella baltica (strain OS185).